Here is a 174-residue protein sequence, read N- to C-terminus: ATP-dependent protease subunit HslV (174 aa).

Thr2 is a catalytic residue. Na(+)-binding residues include Gly157, Cys160, and Thr163.

Belongs to the peptidase T1B family. HslV subfamily. As to quaternary structure, a double ring-shaped homohexamer of HslV is capped on each side by a ring-shaped HslU homohexamer. The assembly of the HslU/HslV complex is dependent on binding of ATP.

Its subcellular location is the cytoplasm. The catalysed reaction is ATP-dependent cleavage of peptide bonds with broad specificity.. With respect to regulation, allosterically activated by HslU binding. Protease subunit of a proteasome-like degradation complex believed to be a general protein degrading machinery. The chain is ATP-dependent protease subunit HslV from Shewanella halifaxensis (strain HAW-EB4).